Consider the following 227-residue polypeptide: PKHD-type hydroxylase ACIAD0531 (227 aa).

A Fe2OG dioxygenase domain is found at 78–178 (HIIPPLFNRY…RFASFFWVQS (101 aa)). 3 residues coordinate Fe cation: His96, Asp98, and His159. Arg169 contributes to the 2-oxoglutarate binding site.

The cofactor is Fe(2+). Requires L-ascorbate as cofactor.

The chain is PKHD-type hydroxylase ACIAD0531 from Acinetobacter baylyi (strain ATCC 33305 / BD413 / ADP1).